Consider the following 379-residue polypeptide: MNLTRDPTGAEIARFIATRTGAQMVELMRCISEPAAQAAFTANLLAAPPVVDARPAASERARKALNAFVRFRCYYVAIPMFKQWPMKKLSNLIGLLWEADPNKSLWSLMTKAWSTIRDQIGKEQAPLDQFFSIICPHLRLPDPALYLEIHGWTLTVDQEGDPTISRSLNSRSSSIGTGNIDIALSVEDIIAYVQSFGYAASFTPTTNVSSPTFLGQSTNLPLENNNPTTAATQAASKIAQARLLARNKRRAKRQTAKETGYRVNLDQDILNAHQISPPPMNRYMPDPYSTFAPTPNHSPNPFYDGLTGFLSEQASIEQVNAATLHNTHSLSDSGLSGDMSYMTMDNFATNMPNLIDYDAFRLGANEDVTLPLFDDIAHA.

The alpha box DNA-binding region spans 60 to 117 (RARKALNAFVRFRCYYVAIPMFKQWPMKKLSNLIGLLWEADPNKSLWSLMTKAWSTIR).

It belongs to the MATALPHA1 family.

The protein localises to the nucleus. Its function is as follows. Mating type proteins are sequence specific DNA-binding proteins that act as master switches in fungal differentiation by controlling gene expression in a cell type-specific fashion. Transcriptional activator that induces the transcription of alpha-specific genes. The chain is Mating-type protein MAT-1 (MAT1) from Curvularia kusanoi (Cochliobolus kusanoi).